The chain runs to 1252 residues: HEAT repeat-containing protein 6 (1252 aa).

One copy of the HEAT 1 repeat lies at Pro230 to Gly269. The segment at Asp365–Gly417 is disordered. Positions Ala384 to Lys396 are enriched in basic residues. Residues Ser471 and Ser474 each carry the phosphoserine modification. 3 HEAT repeats span residues Glu524–Gln562, Ser586–Tyr624, and Ser630–Pro667. Phosphothreonine is present on Thr689. The residue at position 714 (Ser714) is a Phosphoserine.

The sequence is that of HEAT repeat-containing protein 6 (Heatr6) from Rattus norvegicus (Rat).